Consider the following 626-residue polypeptide: Endogenous retrovirus group S71 member 1 Env polyprotein (626 aa).

A signal peptide spans 1-38; that stretch reads MGPEAWVRPLKTAPKPGEAIRLILFIYLSCFFLPVMSS. The tract at residues 39–438 is surface protein; sequence EPSYSFLLTS…PPELHPRLHQ (400 aa). Over 39 to 575 the chain is Extracellular; it reads EPSYSFLLTS…FNWNPWLTTL (537 aa). The short motif at 302–305 is the CXXC element; that stretch reads CWLC. Residues 439–459 form a fusion peptide region; that stretch reads AVPLLVPLLAGLSIAGSAAIG. Residues 439–626 form a transmembrane protein region; that stretch reads AVPLLVPLLA…KTQYDTLVNN (188 aa). The CKS-17 signature appears at 503 to 519; sequence LQNCRCLDLLFLSQGGL. The cysteines at positions 520 and 527 are disulfide-linked. The short motif at 520-528 is the CX6CC element; it reads CAALGESCC. A helical membrane pass occupies residues 576-596; sequence ITGLAGPLLILLLSLIFGPCI. Topologically, residues 597–626 are cytoplasmic; it reads LNSFLNFIKQRIASVKLTYLKTQYDTLVNN.

This sequence belongs to the gamma type-C retroviral envelope protein family. HERV class-I T env subfamily. In terms of processing, the CXXC motif is highly conserved across a broad range of retroviral envelope proteins. It is thought to participate in the formation of a labile disulfide bond possibly with the CX6CC motif present in the transmembrane domain. As to expression, expressed at higher level in thyroid. Expressed at lower level in adrenal, bone marrow, brain, breast, kidney, ovary, placenta, prostate, skin, testis and trachea.

The protein localises to the cell membrane. Functionally, retroviral envelope proteins mediate receptor recognition and membrane fusion during early infection. Endogenous envelope proteins may have kept, lost or modified their original function during evolution. This endogenous envelope protein has lost its original fusogenic properties. The sequence is that of Endogenous retrovirus group S71 member 1 Env polyprotein (ERVS71-1) from Homo sapiens (Human).